The following is a 272-amino-acid chain: GEM-like protein 5 (272 aa).

Positions 1–42 are disordered; the sequence is MTGSQEDQPKIIIDQEQPKTLETEHQPEPSSSSPDQKKWGTH. Over residues 16–27 the composition is skewed to basic and acidic residues; that stretch reads EQPKTLETEHQP. The GRAM domain maps to 143–221; the sequence is SLFRQIFGTE…ANVATVNPVV (79 aa).

It belongs to the GEM family.

The polypeptide is GEM-like protein 5 (Arabidopsis thaliana (Mouse-ear cress)).